Consider the following 245-residue polypeptide: D-aminoacyl-tRNA deacylase (245 aa).

Belongs to the DtdA deacylase family. As to quaternary structure, monomer. It depends on Zn(2+) as a cofactor.

It catalyses the reaction a D-aminoacyl-tRNA + H2O = a tRNA + a D-alpha-amino acid + H(+). It carries out the reaction glycyl-tRNA(Ala) + H2O = tRNA(Ala) + glycine + H(+). Its function is as follows. D-aminoacyl-tRNA deacylase with broad substrate specificity. By recycling D-aminoacyl-tRNA to D-amino acids and free tRNA molecules, this enzyme counteracts the toxicity associated with the formation of D-aminoacyl-tRNA entities in vivo. The sequence is that of D-aminoacyl-tRNA deacylase from Ignicoccus hospitalis (strain KIN4/I / DSM 18386 / JCM 14125).